A 291-amino-acid polypeptide reads, in one-letter code: Acetyl-coenzyme A carboxylase carboxyl transferase subunit beta (291 aa).

Residues 1-23 are disordered; it reads MSWLSKLMPSGIRTDNTPSKKRS. A CoA carboxyltransferase N-terminal domain is found at 28–291; that stretch reads LWEKCSNCGS…LGRQPAPEVA (264 aa). The Zn(2+) site is built by Cys-32, Cys-35, Cys-51, and Cys-54. A C4-type zinc finger spans residues 32 to 54; that stretch reads CSNCGSALYRPELEENLEVCPKC.

This sequence belongs to the AccD/PCCB family. As to quaternary structure, acetyl-CoA carboxylase is a heterohexamer composed of biotin carboxyl carrier protein (AccB), biotin carboxylase (AccC) and two subunits each of ACCase subunit alpha (AccA) and ACCase subunit beta (AccD). It depends on Zn(2+) as a cofactor.

It is found in the cytoplasm. The catalysed reaction is N(6)-carboxybiotinyl-L-lysyl-[protein] + acetyl-CoA = N(6)-biotinyl-L-lysyl-[protein] + malonyl-CoA. The protein operates within lipid metabolism; malonyl-CoA biosynthesis; malonyl-CoA from acetyl-CoA: step 1/1. Functionally, component of the acetyl coenzyme A carboxylase (ACC) complex. Biotin carboxylase (BC) catalyzes the carboxylation of biotin on its carrier protein (BCCP) and then the CO(2) group is transferred by the transcarboxylase to acetyl-CoA to form malonyl-CoA. This chain is Acetyl-coenzyme A carboxylase carboxyl transferase subunit beta, found in Stenotrophomonas maltophilia (strain R551-3).